The following is a 380-amino-acid chain: Cytochrome b (380 aa).

4 consecutive transmembrane segments (helical) span residues 34 to 54, 78 to 99, 114 to 134, and 179 to 199; these read FGSLLGVCLLTQILTGLLLAM, WLIRNLHANGASFFFICIYLHI, WNTGVILLLTLMATAFVGYVL, and FFALHFLLPFMIAGLTLIHLT. Residues histidine 84 and histidine 98 each coordinate heme b. Residues histidine 183 and histidine 197 each contribute to the heme b site. Residue histidine 202 participates in a ubiquinone binding. 4 helical membrane-spanning segments follow: residues 227–247, 289–309, 321–341, and 348–368; these read LKDILGFMLMFLPLTTLALFS, LGGVLALAASVLVLFLAPFLH, LSQLLFWILVANLFILTWVGS, and FIIIGQLASLTYFTILLILFP.

The protein belongs to the cytochrome b family. The cytochrome bc1 complex contains 11 subunits: 3 respiratory subunits (MT-CYB, CYC1 and UQCRFS1), 2 core proteins (UQCRC1 and UQCRC2) and 6 low-molecular weight proteins (UQCRH/QCR6, UQCRB/QCR7, UQCRQ/QCR8, UQCR10/QCR9, UQCR11/QCR10 and a cleavage product of UQCRFS1). This cytochrome bc1 complex then forms a dimer. It depends on heme b as a cofactor.

The protein resides in the mitochondrion inner membrane. Its function is as follows. Component of the ubiquinol-cytochrome c reductase complex (complex III or cytochrome b-c1 complex) that is part of the mitochondrial respiratory chain. The b-c1 complex mediates electron transfer from ubiquinol to cytochrome c. Contributes to the generation of a proton gradient across the mitochondrial membrane that is then used for ATP synthesis. This chain is Cytochrome b (MT-CYB), found in Calonectris leucomelas (Streaked shearwater).